The primary structure comprises 405 residues: D-threonate kinase (405 aa).

Substrate-binding positions include D12, R59, and 88–91 (KVDS). ATP-binding positions include S243, 337–340 (GGDG), and G383.

The protein belongs to the four-carbon acid sugar kinase family.

It catalyses the reaction D-threonate + ATP = 4-O-phospho-D-threonate + ADP + H(+). Functionally, catalyzes the ATP-dependent phosphorylation of D-threonate to D-threonate 4-phosphate. Can also phosphorylate 4-hydroxy-L-threonine, with lower efficiency. The protein is D-threonate kinase of Bordetella bronchiseptica (strain ATCC BAA-588 / NCTC 13252 / RB50) (Alcaligenes bronchisepticus).